A 480-amino-acid chain; its full sequence is Aspartyl/glutamyl-tRNA(Asn/Gln) amidotransferase subunit B (480 aa).

Belongs to the GatB/GatE family. GatB subfamily. In terms of assembly, heterotrimer of A, B and C subunits.

It carries out the reaction L-glutamyl-tRNA(Gln) + L-glutamine + ATP + H2O = L-glutaminyl-tRNA(Gln) + L-glutamate + ADP + phosphate + H(+). It catalyses the reaction L-aspartyl-tRNA(Asn) + L-glutamine + ATP + H2O = L-asparaginyl-tRNA(Asn) + L-glutamate + ADP + phosphate + 2 H(+). In terms of biological role, allows the formation of correctly charged Asn-tRNA(Asn) or Gln-tRNA(Gln) through the transamidation of misacylated Asp-tRNA(Asn) or Glu-tRNA(Gln) in organisms which lack either or both of asparaginyl-tRNA or glutaminyl-tRNA synthetases. The reaction takes place in the presence of glutamine and ATP through an activated phospho-Asp-tRNA(Asn) or phospho-Glu-tRNA(Gln). This is Aspartyl/glutamyl-tRNA(Asn/Gln) amidotransferase subunit B from Streptococcus thermophilus (strain ATCC BAA-491 / LMD-9).